Consider the following 27-residue polypeptide: Superoxide dismutase [Mn] (27 aa).

This sequence belongs to the iron/manganese superoxide dismutase family. As to quaternary structure, homodimer. Requires Mn(2+) as cofactor.

The catalysed reaction is 2 superoxide + 2 H(+) = H2O2 + O2. Its function is as follows. Destroys superoxide anion radicals which are normally produced within the cells and which are toxic to biological systems. This is Superoxide dismutase [Mn] (sodA) from Desulfovibrio desulfuricans.